Reading from the N-terminus, the 235-residue chain is Proteasome subunit alpha (235 aa).

It belongs to the peptidase T1A family. As to quaternary structure, the 20S proteasome core is composed of 14 alpha and 14 beta subunits that assemble into four stacked heptameric rings, resulting in a barrel-shaped structure. The two inner rings, each composed of seven catalytic beta subunits, are sandwiched by two outer rings, each composed of seven alpha subunits. The catalytic chamber with the active sites is on the inside of the barrel. Has a gated structure, the ends of the cylinder being occluded by the N-termini of the alpha-subunits. Is capped by the proteasome-associated ATPase, ARC.

It is found in the cytoplasm. It functions in the pathway protein degradation; proteasomal Pup-dependent pathway. The formation of the proteasomal ATPase ARC-20S proteasome complex, likely via the docking of the C-termini of ARC into the intersubunit pockets in the alpha-rings, may trigger opening of the gate for substrate entry. Interconversion between the open-gate and close-gate conformations leads to a dynamic regulation of the 20S proteasome proteolysis activity. Component of the proteasome core, a large protease complex with broad specificity involved in protein degradation. The protein is Proteasome subunit alpha of Paenarthrobacter aurescens (strain TC1).